Here is a 307-residue protein sequence, read N- to C-terminus: Ras-related protein Rab-33 (307 aa).

The interval 19–80 is disordered; it reads VIDPPKHVTA…IPPAPEAVTA (62 aa). 2 stretches are compositionally biased toward pro residues: residues 42–56 and 65–75; these read PTHP…PAVP and PTAPPPIPPAP. 107 to 114 lines the GTP pocket; sequence GNAAVGKT. The Effector region signature appears at 129–137; the sequence is TEATIGVDF. Residues 155 to 159 and 217 to 220 each bind GTP; these read DTAGQ and NKCD. S-geranylgeranyl cysteine attachment occurs at residues Cys-306 and Cys-307.

The protein belongs to the small GTPase superfamily. Rab family.

It localises to the cell membrane. The sequence is that of Ras-related protein Rab-33 (rab-33) from Caenorhabditis elegans.